We begin with the raw amino-acid sequence, 273 residues long: Replication factor A protein 2 (273 aa).

Residues 1–13 (MATYQPYNEYSSV) are compositionally biased toward polar residues. A disordered region spans residues 1 to 38 (MATYQPYNEYSSVTGGGFENSESRPGSGESETNTRVNT). Phosphoserine is present on Ser27. Residues 29 to 38 (ESETNTRVNT) show a composition bias toward polar residues. The OB DNA-binding region spans 69–157 (VCFVGVVRNI…NIQYAVIKPI (89 aa)). Ser122 is subject to Phosphoserine.

It belongs to the replication factor A protein 2 family. Heterotrimer of 69, 36, and 13 kDa chains. The DNA-binding activity may reside exclusively on the 69 kDa subunit. Interacts with MCM10. Phosphorylated in a cell cycle-dependent manner with phosphorylation increasing at the entry in S phase and dephosphorylation occurring at mitosis. In terms of processing, the N-terminus is blocked.

Its subcellular location is the nucleus. Its function is as follows. Binds to single-stranded sequences participating in DNA replication in addition to those mediating transcriptional repression (URS1) and activation (CAR1). Stimulates the activity of a cognate strand exchange protein (SEP1). It cooperates with T-AG and DNA topoisomerase I to unwind template DNA containing the simian virus 40 origin of DNA replication. The protein is Replication factor A protein 2 (RFA2) of Saccharomyces cerevisiae (strain ATCC 204508 / S288c) (Baker's yeast).